The sequence spans 265 residues: 2-C-methyl-D-erythritol 4-phosphate cytidylyltransferase (265 aa).

The segment covering 231–241 (DRGGASREAER) has biased composition (basic and acidic residues). The disordered stretch occupies residues 231–265 (DRGGASREAERSAMPSAATSVFSGARSAASGSEEV). Low complexity predominate over residues 253–265 (SGARSAASGSEEV).

The protein belongs to the IspD/TarI cytidylyltransferase family. IspD subfamily.

It catalyses the reaction 2-C-methyl-D-erythritol 4-phosphate + CTP + H(+) = 4-CDP-2-C-methyl-D-erythritol + diphosphate. It participates in isoprenoid biosynthesis; isopentenyl diphosphate biosynthesis via DXP pathway; isopentenyl diphosphate from 1-deoxy-D-xylulose 5-phosphate: step 2/6. Functionally, catalyzes the formation of 4-diphosphocytidyl-2-C-methyl-D-erythritol from CTP and 2-C-methyl-D-erythritol 4-phosphate (MEP). This Xanthomonas campestris pv. campestris (strain B100) protein is 2-C-methyl-D-erythritol 4-phosphate cytidylyltransferase.